Here is a 355-residue protein sequence, read N- to C-terminus: Histidine biosynthesis bifunctional protein HisB (355 aa).

Residues Met1–Asn166 are histidinol-phosphatase. The Nucleophile role is filled by Asp9. Positions 9 and 11 each coordinate Mg(2+). Asp11 (proton donor) is an active-site residue. Positions 93, 95, 101, and 103 each coordinate Zn(2+). Asp130 contacts Mg(2+). The segment at Arg167–Leu355 is imidazoleglycerol-phosphate dehydratase.

This sequence in the N-terminal section; belongs to the histidinol-phosphatase family. The protein in the C-terminal section; belongs to the imidazoleglycerol-phosphate dehydratase family. It depends on Mg(2+) as a cofactor. Requires Zn(2+) as cofactor.

The protein resides in the cytoplasm. It carries out the reaction D-erythro-1-(imidazol-4-yl)glycerol 3-phosphate = 3-(imidazol-4-yl)-2-oxopropyl phosphate + H2O. The catalysed reaction is L-histidinol phosphate + H2O = L-histidinol + phosphate. The protein operates within amino-acid biosynthesis; L-histidine biosynthesis; L-histidine from 5-phospho-alpha-D-ribose 1-diphosphate: step 6/9. It functions in the pathway amino-acid biosynthesis; L-histidine biosynthesis; L-histidine from 5-phospho-alpha-D-ribose 1-diphosphate: step 8/9. In Buchnera aphidicola subsp. Schizaphis graminum (strain Sg), this protein is Histidine biosynthesis bifunctional protein HisB.